A 274-amino-acid chain; its full sequence is Dermonecrotic toxin SdSicTox-betaIIB1bv (274 aa).

His5 is a catalytic residue. The Mg(2+) site is built by Glu25 and Asp27. The active-site Nucleophile is the His41. Cystine bridges form between Cys45–Cys51 and Cys47–Cys190. A Mg(2+)-binding site is contributed by Asp85.

The protein belongs to the arthropod phospholipase D family. Class II subfamily. It depends on Mg(2+) as a cofactor. Expressed by the venom gland.

The protein resides in the secreted. The catalysed reaction is an N-(acyl)-sphingosylphosphocholine = an N-(acyl)-sphingosyl-1,3-cyclic phosphate + choline. It carries out the reaction an N-(acyl)-sphingosylphosphoethanolamine = an N-(acyl)-sphingosyl-1,3-cyclic phosphate + ethanolamine. The enzyme catalyses a 1-acyl-sn-glycero-3-phosphocholine = a 1-acyl-sn-glycero-2,3-cyclic phosphate + choline. It catalyses the reaction a 1-acyl-sn-glycero-3-phosphoethanolamine = a 1-acyl-sn-glycero-2,3-cyclic phosphate + ethanolamine. Dermonecrotic toxins cleave the phosphodiester linkage between the phosphate and headgroup of certain phospholipids (sphingolipid and lysolipid substrates), forming an alcohol (often choline) and a cyclic phosphate. This toxin acts on sphingomyelin (SM). It may also act on ceramide phosphoethanolamine (CPE), lysophosphatidylcholine (LPC) and lysophosphatidylethanolamine (LPE), but not on lysophosphatidylserine (LPS), and lysophosphatidylglycerol (LPG). It acts by transphosphatidylation, releasing exclusively cyclic phosphate products as second products. Induces dermonecrosis, hemolysis, increased vascular permeability, edema, inflammatory response, and platelet aggregation. This Sicarius cf. damarensis (strain GJB-2008) (Six-eyed sand spider) protein is Dermonecrotic toxin SdSicTox-betaIIB1bv.